Here is a 430-residue protein sequence, read N- to C-terminus: Enolase (430 aa).

Q165 contacts (2R)-2-phosphoglycerate. E207 (proton donor) is an active-site residue. D244, E287, and D314 together coordinate Mg(2+). Residues K339, R368, S369, and K390 each contribute to the (2R)-2-phosphoglycerate site. K339 acts as the Proton acceptor in catalysis.

The protein belongs to the enolase family. Component of the RNA degradosome, a multiprotein complex involved in RNA processing and mRNA degradation. Mg(2+) serves as cofactor.

It localises to the cytoplasm. It is found in the secreted. The protein localises to the cell surface. The enzyme catalyses (2R)-2-phosphoglycerate = phosphoenolpyruvate + H2O. Its pathway is carbohydrate degradation; glycolysis; pyruvate from D-glyceraldehyde 3-phosphate: step 4/5. Its function is as follows. Catalyzes the reversible conversion of 2-phosphoglycerate (2-PG) into phosphoenolpyruvate (PEP). It is essential for the degradation of carbohydrates via glycolysis. In Xanthomonas axonopodis pv. citri (strain 306), this protein is Enolase.